Reading from the N-terminus, the 95-residue chain is MALERSDVEKIAHLARLGLNDADIPRTTEALNSILGLVDQMQAVDTTGIEPLAHPLEATQRLREDAVTERNRRDTYQAIAPAVQDGLYLVPKVIE.

This sequence belongs to the GatC family. In terms of assembly, heterotrimer of A, B and C subunits.

The catalysed reaction is L-glutamyl-tRNA(Gln) + L-glutamine + ATP + H2O = L-glutaminyl-tRNA(Gln) + L-glutamate + ADP + phosphate + H(+). It catalyses the reaction L-aspartyl-tRNA(Asn) + L-glutamine + ATP + H2O = L-asparaginyl-tRNA(Asn) + L-glutamate + ADP + phosphate + 2 H(+). Functionally, allows the formation of correctly charged Asn-tRNA(Asn) or Gln-tRNA(Gln) through the transamidation of misacylated Asp-tRNA(Asn) or Glu-tRNA(Gln) in organisms which lack either or both of asparaginyl-tRNA or glutaminyl-tRNA synthetases. The reaction takes place in the presence of glutamine and ATP through an activated phospho-Asp-tRNA(Asn) or phospho-Glu-tRNA(Gln). The chain is Aspartyl/glutamyl-tRNA(Asn/Gln) amidotransferase subunit C from Pseudomonas syringae pv. syringae (strain B728a).